We begin with the raw amino-acid sequence, 439 residues long: Protease Do-like 1, chloroplastic (439 aa).

The segment at 154 to 323 (QGSGSGFVWD…IPVDTVGGIV (170 aa)) is serine protease. Catalysis depends on charge relay system residues H173, D203, and S282. The PDZ domain occupies 326–423 (LVRFGKVTRP…EVTVEVLRGD (98 aa)).

It belongs to the peptidase S1C family. In terms of assembly, interacts with PTAC16 and other potential targets for degradation under high light conditions.

It localises to the plastid. The protein resides in the chloroplast thylakoid membrane. With respect to regulation, inhibited by phenylmethylsulfonyl fluoride and O-phenanthroline. Serine protease that is required at high temperature. May be involved in the degradation of damaged proteins. In vivo, can degrade beta-casein. This Arabidopsis thaliana (Mouse-ear cress) protein is Protease Do-like 1, chloroplastic (DEGP1).